A 329-amino-acid polypeptide reads, in one-letter code: Phosphate import ATP-binding protein PstB (329 aa).

The ABC transporter domain occupies 83–325 (FEIENLNFWY…PKQKETNRYI (243 aa)). Residue 116–123 (GKSGCGKS) participates in ATP binding.

This sequence belongs to the ABC transporter superfamily. Phosphate importer (TC 3.A.1.7) family. As to quaternary structure, the complex is composed of two ATP-binding proteins (PstB), two transmembrane proteins (PstC and PstA) and a solute-binding protein (PstS).

It localises to the cell membrane. The enzyme catalyses phosphate(out) + ATP + H2O = ADP + 2 phosphate(in) + H(+). Its function is as follows. Part of the ABC transporter complex PstSACB involved in phosphate import. Responsible for energy coupling to the transport system. The protein is Phosphate import ATP-binding protein PstB of Mycoplasma pneumoniae (strain ATCC 29342 / M129 / Subtype 1) (Mycoplasmoides pneumoniae).